A 485-amino-acid chain; its full sequence is Hydrogenase transcriptional regulatory protein HoxA (485 aa).

A Response regulatory domain is found at 6-120; the sequence is TILVVDDEVR…QLVETVKEAV (115 aa). The residue at position 54 (Asp54) is a 4-aspartylphosphate. Residues 166 to 392 enclose the Sigma-54 factor interaction domain; that stretch reads STESPMHAVI…ELQNEIQRMA (227 aa). Residues 192 to 199 and 264 to 273 contribute to the ATP site; these read GESGTGKE and EIGETSPAFQ. A disordered region spans residues 404 to 426; that stretch reads PLLGRRNGKRSAPLPAHGRLNGS. The H-T-H motif DNA-binding region spans 451 to 470; that stretch reads NISRVASELGLSRVGLRNKL.

It localises to the cytoplasm. Its function is as follows. Probable member of the two-component regulatory system involved in the regulation of the hydrogenase activity. HoxA is probably phosphorylated by a sensory component (which could be HoxX) and then acts in conjunction with sigma-54 as a transcriptional activator. In Bradyrhizobium diazoefficiens (strain JCM 10833 / BCRC 13528 / IAM 13628 / NBRC 14792 / USDA 110), this protein is Hydrogenase transcriptional regulatory protein HoxA (hoxA).